Here is a 220-residue protein sequence, read N- to C-terminus: LOB domain-containing protein 31 (220 aa).

Residues 10 to 112 form the LOB domain; sequence GPCGACKFLR…AELAYVQTQL (103 aa). Residues 117–172 form a disordered region; sequence GLPPPNSQNNSRTEAASSSNVPLISSVDSKDNMSSSSSHIPCMSQQQEQEQPKEAI. A compositionally biased stretch (polar residues) spans 123–139; that stretch reads SQNNSRTEAASSSNVPL.

Belongs to the LOB domain-containing protein family. As to expression, expressed in roots, stems and flowers.

In Arabidopsis thaliana (Mouse-ear cress), this protein is LOB domain-containing protein 31 (LBD31).